Here is a 109-residue protein sequence, read N- to C-terminus: uncharacterized protein (109 aa).

A helical transmembrane segment spans residues 78-98 (YTCIMYIGLLCMFVLLYMTVI).

It localises to the membrane. This is an uncharacterized protein from Saccharomyces cerevisiae (strain ATCC 204508 / S288c) (Baker's yeast).